We begin with the raw amino-acid sequence, 192 residues long: Signal peptidase complex subunit 2 (192 aa).

The Cytoplasmic portion of the chain corresponds to methionine 1 to arginine 46. A helical membrane pass occupies residues leucine 47–asparagine 69. Residues lysine 70–phenylalanine 78 are Lumenal-facing. A helical membrane pass occupies residues leucine 79–tyrosine 98. At threonine 99–lysine 192 the chain is on the cytoplasmic side.

Belongs to the SPCS2 family. As to quaternary structure, component of the signal peptidase complex (SPC) composed of a catalytic subunit SEC11 and three accessory subunits SPCS1, SPCS2 and SPCS3. The complex induces a local thinning of the ER membrane which is used to measure the length of the signal peptide (SP) h-region of protein substrates. This ensures the selectivity of the complex towards h-regions shorter than 18-20 amino acids.

It is found in the endoplasmic reticulum membrane. Its function is as follows. Component of the signal peptidase complex (SPC) which catalyzes the cleavage of N-terminal signal sequences from nascent proteins as they are translocated into the lumen of the endoplasmic reticulum. Enhances the enzymatic activity of SPC and facilitates the interactions between different components of the translocation site. The sequence is that of Signal peptidase complex subunit 2 from Arabidopsis thaliana (Mouse-ear cress).